The chain runs to 1080 residues: uncharacterized protein (1080 aa).

The N-terminal stretch at 1–17 is a signal peptide; that stretch reads MHKLLVIIAHIIVCAYA. Over 18-1042 the chain is Extracellular; sequence DFTGFDNEAG…KSLDLEMIGK (1025 aa). Asparagine 439, asparagine 664, and asparagine 875 each carry an N-linked (GlcNAc...) asparagine; by host glycan. Residues 1043–1063 form a helical membrane-spanning segment; that stretch reads IILLIAFVIVFVILLTIGIIT. Residues 1064-1080 lie on the Cytoplasmic side of the membrane; it reads LVKRHRETLPEDEYLLP.

The protein resides in the host membrane. This is an uncharacterized protein from Ostreid herpesvirus 1 (isolate France) (OsHV-1).